A 90-amino-acid chain; its full sequence is Small ribosomal subunit protein bS20 (90 aa).

The protein belongs to the bacterial ribosomal protein bS20 family.

In terms of biological role, binds directly to 16S ribosomal RNA. This chain is Small ribosomal subunit protein bS20, found in Mesomycoplasma hyopneumoniae (strain 232) (Mycoplasma hyopneumoniae).